The primary structure comprises 251 residues: Small ribosomal subunit protein uS2 (251 aa).

The protein belongs to the universal ribosomal protein uS2 family.

In Synechococcus sp. (strain ATCC 27144 / PCC 6301 / SAUG 1402/1) (Anacystis nidulans), this protein is Small ribosomal subunit protein uS2.